Consider the following 488-residue polypeptide: Alpha,alpha-trehalose-phosphate synthase [UDP-forming] 56 kDa subunit (488 aa).

D-glucose 6-phosphate is bound by residues Tyr-102 and Asp-156. UDP-binding residues include Arg-293 and Lys-298. 2 residues coordinate UDP-alpha-D-glucose: Arg-293 and Lys-298. Arg-331 lines the D-glucose 6-phosphate pocket. Residues Ile-370 and 396 to 400 each bind UDP; that span reads LVSYE. Residues Ile-370 and 392–400 each bind UDP-alpha-D-glucose; that span reads DGMNLVSYE.

This sequence belongs to the glycosyltransferase 20 family. As to quaternary structure, trehalose synthase/phosphatase complex contains three or four polypeptides of 56 kDa (TPS1), 102 kDa (TPS2), 115 kDa (TPS3) and 123 kDa (TSL1).

The catalysed reaction is D-glucose 6-phosphate + UDP-alpha-D-glucose = alpha,alpha-trehalose 6-phosphate + UDP + H(+). The protein operates within carbohydrate biosynthesis. Its function is as follows. Synthase catalytic subunit of the trehalose synthase complex that catalyzes the production of trehalose from glucose-6-phosphate and UDP-alpha-D-glucose in a two step process. Can function independently of the complex. The chain is Alpha,alpha-trehalose-phosphate synthase [UDP-forming] 56 kDa subunit from Kluyveromyces lactis (strain ATCC 8585 / CBS 2359 / DSM 70799 / NBRC 1267 / NRRL Y-1140 / WM37) (Yeast).